We begin with the raw amino-acid sequence, 537 residues long: Zinc finger protein 703 (537 aa).

3 disordered regions span residues 1–38, 90–254, and 300–323; these read MNCS…LRQA, SQIG…VAPV, and VGNQ…LTGA. The segment covering 101–111 has biased composition (polar residues); sequence SKLNSVTSSGL. The segment covering 149–158 has biased composition (low complexity); sequence GSSSGGAADK. Residues 176-185 are compositionally biased toward polar residues; the sequence is SPSSRVSSPG. Positions 188–203 are enriched in basic and acidic residues; that stretch reads CDSKNNESQEKKEPEA. Residues 205–220 show a composition bias toward polar residues; sequence KANSETSQVNPTLTRA. Positions 221–232 are enriched in low complexity; the sequence is STSNSSAESSQS. A C2H2-type zinc finger spans residues 409–437; the sequence is HICNWVSASGPCDKRFSTSEELLAHLRTH.

Belongs to the Elbow/Noc family.

The protein localises to the nucleus. The protein resides in the cytoplasm. Transcriptional corepressor which does not bind directly to DNA and may regulate transcription through recruitment of histone deacetylases to gene promoters. Regulates cell adhesion, migration and proliferation. Involved in specification of the lateral neural plate border (NPB). May be required for segmental gene expression during hindbrain development. The sequence is that of Zinc finger protein 703 (znf703) from Xenopus tropicalis (Western clawed frog).